The sequence spans 489 residues: Cytochrome P450 monooxygenase orf5 (489 aa).

Residues 13-35 (FVRLLAFHLIGLFVSITVYRLFF) form a helical membrane-spanning segment. N37, N118, N171, and N345 each carry an N-linked (GlcNAc...) asparagine glycan. A heme-binding site is contributed by C428.

Belongs to the cytochrome P450 family. It depends on heme as a cofactor.

Its subcellular location is the membrane. It functions in the pathway mycotoxin biosynthesis. In terms of biological role, cytochrome P450 monooxygenase; part of the gene cluster that mediates the biosynthesis of brefeldin A (BFA), a protein transport inhibitor that shows antiviral, antifungal, and antitumor properties. The proposed biosynthesis of BFA involves formation of an acyclic polyketide chain that is differentially tailored throughout the backbone. The highly reducing polyketide synthase Bref-PKS is proposed to synthesize the precisely reduced octaketide precursor, which could then be directly offloaded by the thiohydrolase enzyme Bref-TH followed by a cytochrome P450 monooxygenase-mediated formation of the cyclopentane ring and macrocyclization to afford 7-deoxy BFA. Alternatively, the first ring annulation can also occur on the ACP-tethered intermediate before the thiohydrolase release and lactonization. The C7-hydroxylation by another cytochrome P450 monooxygenase is believed to be the final step in the process to obtain the final structure of BFA. In addition to the HRPKS Bref-PKS and the thiohydrolase Bref-TH, the brefeldin A biosynthesis cluster contains 4 cytochrome p450 monooxygenases (called orf3 to orf6), as well a the probable cluster-specific transcription regulator orf8. The protein is Cytochrome P450 monooxygenase orf5 of Eupenicillium brefeldianum (Penicillium brefeldianum).